Reading from the N-terminus, the 142-residue chain is Large ribosomal subunit protein uL13 (142 aa).

This sequence belongs to the universal ribosomal protein uL13 family. In terms of assembly, part of the 50S ribosomal subunit.

Its function is as follows. This protein is one of the early assembly proteins of the 50S ribosomal subunit, although it is not seen to bind rRNA by itself. It is important during the early stages of 50S assembly. This is Large ribosomal subunit protein uL13 from Francisella tularensis subsp. mediasiatica (strain FSC147).